Consider the following 332-residue polypeptide: L-lactate dehydrogenase A chain (332 aa).

Ala-2 is modified (N-acetylalanine). Lys-5 is subject to N6-acetyllysine; alternate. Lys-5 carries the N6-succinyllysine; alternate modification. An N6-acetyllysine modification is found at Lys-14. An NAD(+)-binding site is contributed by 29-57; that stretch reads GAVGMACAISILMKDLADELALVDVMEDK. Lys-57 is modified (N6-acetyllysine; alternate). A Glycyl lysine isopeptide (Lys-Gly) (interchain with G-Cter in SUMO2); alternate cross-link involves residue Lys-57. Lys-81 carries the N6-acetyllysine modification. Residue Arg-99 coordinates NAD(+). Arg-106 serves as a coordination point for substrate. At Lys-118 the chain carries N6-acetyllysine; alternate. Lys-118 bears the N6-succinyllysine; alternate mark. Lys-126 bears the N6-acetyllysine mark. Asn-138 is an NAD(+) binding site. Residues Asn-138 and Arg-169 each contribute to the substrate site. His-193 functions as the Proton acceptor in the catalytic mechanism. Residues Lys-224 and Lys-232 each carry the N6-acetyllysine modification. Position 239 is a phosphotyrosine (Tyr-239). The residue at position 243 (Lys-243) is an N6-acetyllysine. Thr-248 is a substrate binding site. A Phosphothreonine modification is found at Thr-309. Ser-310 is modified (phosphoserine). Lys-318 carries the post-translational modification N6-acetyllysine; alternate. Lys-318 carries the post-translational modification N6-succinyllysine; alternate. Phosphothreonine is present on Thr-322.

The protein belongs to the LDH/MDH superfamily. LDH family. In terms of assembly, homotetramer. Interacts with PTEN upstream reading frame protein MP31. In terms of processing, ISGylated.

The protein resides in the cytoplasm. The catalysed reaction is (S)-lactate + NAD(+) = pyruvate + NADH + H(+). Its pathway is fermentation; pyruvate fermentation to lactate; (S)-lactate from pyruvate: step 1/1. Functionally, interconverts simultaneously and stereospecifically pyruvate and lactate with concomitant interconversion of NADH and NAD(+). The polypeptide is L-lactate dehydrogenase A chain (LDHA) (Oryctolagus cuniculus (Rabbit)).